The following is a 283-amino-acid chain: Elongation factor Ts (283 aa).

The segment at 79-82 (TDFV) is involved in Mg(2+) ion dislocation from EF-Tu.

It belongs to the EF-Ts family.

The protein localises to the cytoplasm. Associates with the EF-Tu.GDP complex and induces the exchange of GDP to GTP. It remains bound to the aminoacyl-tRNA.EF-Tu.GTP complex up to the GTP hydrolysis stage on the ribosome. The sequence is that of Elongation factor Ts from Shewanella sp. (strain ANA-3).